Here is a 486-residue protein sequence, read N- to C-terminus: MTTVYTLVSWLAILGYWLLIAGVTLRILMKRRAVPSAMAWLLIIYILPLVGIIAYLAVGELHLGKRRAERARAMWPSTAKWLNDLKACKHIFAEENSSVAAPLFKLCERRQGIAGVKGNQLQLMTESDDVMQALIRDIQLARHNIEMVFYIWQPGGMADQVAESLMAAARRGIHCRLMLDSAGSVAFFHSPWPELMRNAGIEVVEALKVNLMRVFLRRMDLRQHRKMIMIDNYIAYTGSMNMVDPRYFKQDAGVGQWIDLMARMEGPIATAMGIIYSCDWEIETGKRILPPPPDVNIMPFEQASGHTIHTIASGPGFPEDLIHQALLTAAYSAREYLIMTTPYFVPSDDLLHAICTAAQRGVDVSIILPRKNDSMLVGWASRAFFTELLAAGVKVYQFEGGLLHTKSVLVDGELSLVGTVNLDMRSLWLNFEITLAIDDKGFGADLAAVQDDYISRSRLLDARLWLKRPLWQRVAERLFYFFSPLL.

2 consecutive transmembrane segments (helical) span residues 3–23 (TVYT…IAGV) and 38–58 (MAWL…YLAV). 2 PLD phosphodiesterase domains span residues 219-246 (MDLR…VDPR) and 399-426 (EGGL…DMRS). Residues His224, Lys226, Asp231, His404, Lys406, and Asp411 contribute to the active site.

It belongs to the phospholipase D family. Cardiolipin synthase subfamily. ClsA sub-subfamily.

It localises to the cell inner membrane. The catalysed reaction is 2 a 1,2-diacyl-sn-glycero-3-phospho-(1'-sn-glycerol) = a cardiolipin + glycerol. Catalyzes the reversible phosphatidyl group transfer from one phosphatidylglycerol molecule to another to form cardiolipin (CL) (diphosphatidylglycerol) and glycerol. The protein is Cardiolipin synthase A of Escherichia coli O157:H7 (strain EC4115 / EHEC).